Here is a 233-residue protein sequence, read N- to C-terminus: uncharacterized protein (233 aa).

A run of 3 helical transmembrane segments spans residues 78–98 (FCLI…PVMY), 113–133 (FITC…LFKL), and 188–208 (FLLI…YGTI).

It localises to the membrane. This is an uncharacterized protein from Saccharomyces cerevisiae (strain ATCC 204508 / S288c) (Baker's yeast).